The primary structure comprises 430 residues: Adenylosuccinate synthetase (430 aa).

GTP is bound by residues 12–18 (GDEGKGK) and 40–42 (GHT). D13 functions as the Proton acceptor in the catalytic mechanism. Residues D13 and G40 each coordinate Mg(2+). Residues 13–16 (DEGK), 38–41 (NAGH), T130, R144, Q224, T239, and R303 contribute to the IMP site. H41 functions as the Proton donor in the catalytic mechanism. Residue 299–305 (TVTGRKR) coordinates substrate. Residues R305, 331–333 (KLD), and 413–415 (STS) contribute to the GTP site.

The protein belongs to the adenylosuccinate synthetase family. Homodimer. Requires Mg(2+) as cofactor.

The protein localises to the cytoplasm. It catalyses the reaction IMP + L-aspartate + GTP = N(6)-(1,2-dicarboxyethyl)-AMP + GDP + phosphate + 2 H(+). Its pathway is purine metabolism; AMP biosynthesis via de novo pathway; AMP from IMP: step 1/2. In terms of biological role, plays an important role in the de novo pathway of purine nucleotide biosynthesis. Catalyzes the first committed step in the biosynthesis of AMP from IMP. This Cereibacter sphaeroides (strain ATCC 17025 / ATH 2.4.3) (Rhodobacter sphaeroides) protein is Adenylosuccinate synthetase.